The sequence spans 249 residues: ATP synthase subunit a 1 (249 aa).

The next 6 membrane-spanning stretches (helical) occupy residues 26 to 46, 84 to 104, 114 to 134, 143 to 163, 193 to 213, and 216 to 236; these read FTNV…FLYL, FFPF…LGLF, IIVT…YGFF, LFVP…IEII, FVVS…LPLI, and VAIT…FTVL.

Belongs to the ATPase A chain family. As to quaternary structure, F-type ATPases have 2 components, CF(1) - the catalytic core - and CF(0) - the membrane proton channel. CF(1) has five subunits: alpha(3), beta(3), gamma(1), delta(1), epsilon(1). CF(0) has three main subunits: a(1), b(2) and c(9-12). The alpha and beta chains form an alternating ring which encloses part of the gamma chain. CF(1) is attached to CF(0) by a central stalk formed by the gamma and epsilon chains, while a peripheral stalk is formed by the delta and b chains.

The protein localises to the cell inner membrane. Its function is as follows. Key component of the proton channel; it plays a direct role in the translocation of protons across the membrane. In Brucella anthropi (strain ATCC 49188 / DSM 6882 / CCUG 24695 / JCM 21032 / LMG 3331 / NBRC 15819 / NCTC 12168 / Alc 37) (Ochrobactrum anthropi), this protein is ATP synthase subunit a 1.